Here is a 200-residue protein sequence, read N- to C-terminus: MLKYPDYLSKLISLLRKLPGIGFKTAEKLAFELLDWDQDQLEAMGQAFSEVSAARSHCSTCFCLKNLPESNCEFCQNNRDTSTLCIVATPKDIFSLERSQIFKGHYYVLGTLLSPITGKHIDVERIGLLKQRIEFLKPQEIILALDATLEGDATALFLKQELAFSSASISRLALGLPIGLSFDYVDSGTLARAFSGRNPY.

The segment at 58 to 75 (CSTCFCLKNLPESNCEFC) adopts a C4-type zinc-finger fold. The Toprim domain maps to 82 to 177 (STLCIVATPK…SISRLALGLP (96 aa)).

Belongs to the RecR family.

Its function is as follows. May play a role in DNA repair. It seems to be involved in an RecBC-independent recombinational process of DNA repair. It may act with RecF and RecO. The polypeptide is Recombination protein RecR (Chlamydia caviae (strain ATCC VR-813 / DSM 19441 / 03DC25 / GPIC) (Chlamydophila caviae)).